A 602-amino-acid polypeptide reads, in one-letter code: Chaperone protein DnaK (602 aa).

A Phosphothreonine; by autocatalysis modification is found at Thr-199.

The protein belongs to the heat shock protein 70 family.

Acts as a chaperone. The chain is Chaperone protein DnaK from Carsonella ruddii (strain PV).